A 209-amino-acid chain; its full sequence is Large ribosomal subunit protein uL3 (209 aa).

Residues 130-162 (RGPMTHGSKFKRAPGSMGASSDPSRTFKNKRMP) are disordered.

This sequence belongs to the universal ribosomal protein uL3 family. As to quaternary structure, part of the 50S ribosomal subunit. Forms a cluster with proteins L14 and L19.

Its function is as follows. One of the primary rRNA binding proteins, it binds directly near the 3'-end of the 23S rRNA, where it nucleates assembly of the 50S subunit. The chain is Large ribosomal subunit protein uL3 from Clostridium botulinum (strain Alaska E43 / Type E3).